A 652-amino-acid chain; its full sequence is DNA ligase (652 aa).

NAD(+)-binding positions include 29–33 (DSDYD), 78–79 (SL), and glutamate 107. Catalysis depends on lysine 109, which acts as the N6-AMP-lysine intermediate. The NAD(+) site is built by arginine 130, glutamate 164, lysine 278, and lysine 302. Positions 395, 398, 413, and 418 each coordinate Zn(2+). The BRCT domain occupies 577–652 (NSDAALFGLT…IEDEDWLRQL (76 aa)).

The protein belongs to the NAD-dependent DNA ligase family. LigA subfamily. Mg(2+) serves as cofactor. The cofactor is Mn(2+).

It catalyses the reaction NAD(+) + (deoxyribonucleotide)n-3'-hydroxyl + 5'-phospho-(deoxyribonucleotide)m = (deoxyribonucleotide)n+m + AMP + beta-nicotinamide D-nucleotide.. Its function is as follows. DNA ligase that catalyzes the formation of phosphodiester linkages between 5'-phosphoryl and 3'-hydroxyl groups in double-stranded DNA using NAD as a coenzyme and as the energy source for the reaction. It is essential for DNA replication and repair of damaged DNA. The protein is DNA ligase of Streptococcus pyogenes serotype M3 (strain ATCC BAA-595 / MGAS315).